We begin with the raw amino-acid sequence, 451 residues long: Tubulin alpha-2 chain (451 aa).

Q11 serves as a coordination point for GTP. N6-acetyllysine is present on K40. GTP contacts are provided by E71, G144, T145, T179, N206, and N228. Position 71 (E71) interacts with Mg(2+). Residue E254 is part of the active site.

The protein belongs to the tubulin family. Dimer of alpha and beta chains. A typical microtubule is a hollow water-filled tube with an outer diameter of 25 nm and an inner diameter of 15 nM. Alpha-beta heterodimers associate head-to-tail to form protofilaments running lengthwise along the microtubule wall with the beta-tubulin subunit facing the microtubule plus end conferring a structural polarity. Microtubules usually have 13 protofilaments but different protofilament numbers can be found in some organisms and specialized cells. It depends on Mg(2+) as a cofactor. Undergoes a tyrosination/detyrosination cycle, the cyclic removal and re-addition of a C-terminal tyrosine residue by the enzymes tubulin tyrosine carboxypeptidase (TTCP) and tubulin tyrosine ligase (TTL), respectively.

It localises to the cytoplasm. The protein localises to the cytoskeleton. It carries out the reaction GTP + H2O = GDP + phosphate + H(+). In terms of biological role, tubulin is the major constituent of microtubules, a cylinder consisting of laterally associated linear protofilaments composed of alpha- and beta-tubulin heterodimers. Microtubules grow by the addition of GTP-tubulin dimers to the microtubule end, where a stabilizing cap forms. Below the cap, tubulin dimers are in GDP-bound state, owing to GTPase activity of alpha-tubulin. This chain is Tubulin alpha-2 chain (TUBA2), found in Chlamydomonas reinhardtii (Chlamydomonas smithii).